Here is a 204-residue protein sequence, read N- to C-terminus: ADP-ribosylation factor-like protein 15 (204 aa).

GTP is bound by residues 39–46 (GLTGSGKT), 82–86 (ELGGA), and 142–145 (NHQD).

This sequence belongs to the small GTPase superfamily. Arf family.

In Pongo abelii (Sumatran orangutan), this protein is ADP-ribosylation factor-like protein 15 (ARL15).